We begin with the raw amino-acid sequence, 874 residues long: Ectonucleotide pyrophosphatase/phosphodiesterase family member 3 (874 aa).

The Cytoplasmic portion of the chain corresponds to 1–11 (MQSTLNLSTEE). A helical; Signal-anchor for type II membrane protein membrane pass occupies residues 12–30 (PVKRNTVKKYKIICIVLLI). Residues 31–874 (LLVAVSLALG…TYLPVFETVI (844 aa)) are Extracellular-facing. SMB domains lie at 50-93 (EQGS…VQST) and 94-138 (QIWT…GETS). Disulfide bonds link Cys-54/Cys-71, Cys-58/Cys-89, Cys-69/Cys-82, Cys-75/Cys-81, Cys-98/Cys-115, Cys-103/Cys-133, Cys-113/Cys-126, Cys-119/Cys-125, Cys-144/Cys-190, and Cys-152/Cys-364. The short motif at 78 to 80 (RGD) is the Cell attachment site element. Residues 160-544 (PVILFSMDGF…HGSLNHLLKV (385 aa)) are phosphodiesterase. Asp-167 contacts Zn(2+). Lys-204 provides a ligand contact to ATP. Thr-205 serves as a coordination point for Zn(2+). Thr-205 serves as the catalytic Nucleophile. Asn-226 is an ATP binding site. An N-linked (GlcNAc...) asparagine glycan is attached at Asn-236. Asp-275 provides a ligand contact to ATP. N-linked (GlcNAc...) asparagine glycosylation is present at Asn-279. Tyr-289 serves as a coordination point for ATP. N-linked (GlcNAc...) asparagine glycosylation occurs at Asn-290. Zn(2+) contacts are provided by Asp-325, His-329, Asp-372, and His-373. Disulfide bonds link Cys-380-Cys-477, Cys-428-Cys-817, Cys-561-Cys-622, Cys-574-Cys-678, Cys-576-Cys-663, and Cys-786-Cys-796. The N-linked (GlcNAc...) asparagine glycan is linked to Asn-425. His-482 provides a ligand contact to Zn(2+). A glycan (N-linked (GlcNAc...) asparagine) is linked at Asn-532. The interval 581 to 874 (TNSDLERVNQ…TYLPVFETVI (294 aa)) is nuclease. N-linked (GlcNAc...) asparagine glycosylation is found at Asn-677, Asn-686, and Asn-698. Ca(2+) is bound by residues Asp-751, Asp-755, His-757, and Asp-759. Residues Asn-770, Asn-788, and Asn-820 are each glycosylated (N-linked (GlcNAc...) asparagine).

This sequence belongs to the nucleotide pyrophosphatase/phosphodiesterase family. As to quaternary structure, monomer and homodimer. It depends on Zn(2+) as a cofactor. In terms of processing, N-glycosylated. N-glycosylation is necessary for normal transport to the cell membrane, but is not the apical targeting signal.

Its subcellular location is the cell membrane. It is found in the apical cell membrane. It localises to the secreted. It carries out the reaction a ribonucleoside 5'-triphosphate + H2O = a ribonucleoside 5'-phosphate + diphosphate + H(+). The enzyme catalyses ATP + H2O = AMP + diphosphate + H(+). The catalysed reaction is CTP + H2O = CMP + diphosphate + H(+). It catalyses the reaction GTP + H2O = GMP + diphosphate + H(+). It carries out the reaction UTP + H2O = UMP + diphosphate + H(+). The enzyme catalyses UDP-N-acetyl-alpha-D-glucosamine + H2O = N-acetyl-alpha-D-glucosamine 1-phosphate + UMP + 2 H(+). The catalysed reaction is P(1),P(3)-bis(5'-adenosyl) triphosphate + H2O = AMP + ADP + 2 H(+). It catalyses the reaction P(1),P(4)-bis(5'-adenosyl) tetraphosphate + H2O = AMP + ATP + 2 H(+). It carries out the reaction P(1),P(5)-bis(5'-adenosyl) pentaphosphate + H2O = adenosine 5'-tetraphosphate + AMP + 2 H(+). The enzyme catalyses P(1),P(4)-bis(5'-guanosyl) tetraphosphate + H2O = GMP + GTP + 2 H(+). The catalysed reaction is Hydrolytically removes 5'-nucleotides successively from the 3'-hydroxy termini of 3'-hydroxy-terminated oligonucleotides.. In terms of biological role, hydrolase that metabolizes extracellular nucleotides, including ATP, GTP, UTP and CTP. Limits mast cells and basophils response during inflammation and during the chronic phases of allergic responses by eliminating extracellular ATP, a signaling molecule activating these cells in an autocrine manner. Metabolizes extracellular ATP in the lumen of the small intestine, and thereby prevents ATP-induced apoptosis of intestinal plasmacytoid dendritic cells. Has a broad specificity and can also hydrolyze UDP-GlcNAc into UMP and GlcNAc-1-phosphate and potentially several other intracellular nucleotide sugars, including UDP-GalNAc, CMP-NeuAc, GDP-Fuc, and UDP-GlcA. Thereby, could modulate glycan biosynthesis and protein glycosylation. Can hydrolyze extracellular dinucleoside polyphosphates, including the vasoactive adenosine polyphosphates as well. In addition, displays an alkaline phosphodiesterase activity in vitro. This chain is Ectonucleotide pyrophosphatase/phosphodiesterase family member 3 (ENPP3), found in Bos taurus (Bovine).